A 112-amino-acid chain; its full sequence is Ribosome-binding factor A (112 aa).

This sequence belongs to the RbfA family. Monomer. Binds 30S ribosomal subunits, but not 50S ribosomal subunits or 70S ribosomes.

Its subcellular location is the cytoplasm. Its function is as follows. One of several proteins that assist in the late maturation steps of the functional core of the 30S ribosomal subunit. Associates with free 30S ribosomal subunits (but not with 30S subunits that are part of 70S ribosomes or polysomes). Required for efficient processing of 16S rRNA. May interact with the 5'-terminal helix region of 16S rRNA. In Mycoplasmopsis pulmonis (strain UAB CTIP) (Mycoplasma pulmonis), this protein is Ribosome-binding factor A.